Reading from the N-terminus, the 366-residue chain is RNA 3'-terminal phosphate cyclase (366 aa).

The ATP site is built by Q104, P131, Y294, D297, Q298, and H320. Residue H320 is the Tele-AMP-histidine intermediate of the active site.

It belongs to the RNA 3'-terminal cyclase family. Type 1 subfamily.

Its subcellular location is the nucleus. The protein resides in the nucleoplasm. It catalyses the reaction a 3'-end 3'-phospho-ribonucleotide-RNA + ATP = a 3'-end 2',3'-cyclophospho-ribonucleotide-RNA + AMP + diphosphate. Functionally, catalyzes the conversion of 3'-phosphate to a 2',3'-cyclic phosphodiester at the end of RNA. The mechanism of action of the enzyme occurs in 3 steps: (A) adenylation of the enzyme by ATP; (B) transfer of adenylate to an RNA-N3'P to produce RNA-N3'PP5'A; (C) and attack of the adjacent 2'-hydroxyl on the 3'-phosphorus in the diester linkage to produce the cyclic end product. Likely functions in some aspects of cellular RNA processing. Function plays an important role in regulating axon regeneration by inhibiting central nervous system (CNS) axon regeneration following optic nerve injury. The chain is RNA 3'-terminal phosphate cyclase (RTCA) from Bos taurus (Bovine).